Here is a 149-residue protein sequence, read N- to C-terminus: MSQNHRILLLNGPNLNLLGKREPGIYGSKTLDEIVADLKHNAIELGVTLEHLQSNAEHELVSRIHQAMGQVDYIIINPAAFTHTSVAIRDALLGVAIPFIEVHLSNVHAREPFRHHSYLSDVAKGVICGLGADGYQFALTAAVHQLRAA.

Residue tyrosine 26 is the Proton acceptor of the active site. Positions 77, 83, and 90 each coordinate substrate. The Proton donor role is filled by histidine 103. Substrate contacts are provided by residues 104-105 and arginine 114; that span reads LS.

Belongs to the type-II 3-dehydroquinase family. Homododecamer.

The enzyme catalyses 3-dehydroquinate = 3-dehydroshikimate + H2O. Its pathway is metabolic intermediate biosynthesis; chorismate biosynthesis; chorismate from D-erythrose 4-phosphate and phosphoenolpyruvate: step 3/7. Its function is as follows. Catalyzes a trans-dehydration via an enolate intermediate. The chain is 3-dehydroquinate dehydratase from Aeromonas salmonicida (strain A449).